A 98-amino-acid polypeptide reads, in one-letter code: NADH-ubiquinone oxidoreductase chain 4L (98 aa).

3 helical membrane-spanning segments follow: residues 1-21 (MSLV…GLLM), 29-49 (SLLC…LTIL), and 61-81 (IILL…LVMV).

Belongs to the complex I subunit 4L family. As to quaternary structure, core subunit of respiratory chain NADH dehydrogenase (Complex I) which is composed of 45 different subunits.

Its subcellular location is the mitochondrion inner membrane. The enzyme catalyses a ubiquinone + NADH + 5 H(+)(in) = a ubiquinol + NAD(+) + 4 H(+)(out). Functionally, core subunit of the mitochondrial membrane respiratory chain NADH dehydrogenase (Complex I) which catalyzes electron transfer from NADH through the respiratory chain, using ubiquinone as an electron acceptor. Part of the enzyme membrane arm which is embedded in the lipid bilayer and involved in proton translocation. This is NADH-ubiquinone oxidoreductase chain 4L (MT-ND4L) from Muntiacus feae (Fea's muntjac).